The sequence spans 1068 residues: Self-sufficient cytochrome P450 monooxygenase CYP505U2 (1068 aa).

C408 is a binding site for heme. The segment at 464-498 (TTAGMVPESVQSLRQAQKSGKPGNSKSSANESMVG) is disordered. The span at 472–498 (SVQSLRQAQKSGKPGNSKSSANESMVG) shows a compositional bias: polar residues. In terms of domain architecture, Flavodoxin-like spans 505 to 646 (VSIFYGSNSG…DLEKWEESIL (142 aa)). FMN is bound by residues 511 to 515 (SNSGS) and 590 to 622 (VFGCGHHDWATTFYKIPILIDELLEQRGAQRVA). In terms of domain architecture, FAD-binding FR-type spans 679–909 (KEFLEATVTS…RRSNPAFHPP (231 aa)).

This sequence in the N-terminal section; belongs to the cytochrome P450 family. Requires FAD as cofactor. The cofactor is FMN. Heme is required as a cofactor.

The enzyme catalyses 2 oxidized [cytochrome P450] + NADPH = 2 reduced [cytochrome P450] + NADP(+) + H(+). The catalysed reaction is an organic molecule + reduced [NADPH--hemoprotein reductase] + O2 = an alcohol + oxidized [NADPH--hemoprotein reductase] + H2O + H(+). It catalyses the reaction dodecanoate + reduced [NADPH--hemoprotein reductase] + O2 = 3-hydroxydodecanoate + oxidized [NADPH--hemoprotein reductase] + H2O + H(+). It carries out the reaction dodecanoate + reduced [NADPH--hemoprotein reductase] + O2 = 7-hydroxydodecanoate + oxidized [NADPH--hemoprotein reductase] + H2O + H(+). The enzyme catalyses dodecan-1-ol + reduced [NADPH--hemoprotein reductase] + O2 = 1,4-dodecanediol + oxidized [NADPH--hemoprotein reductase] + H2O + H(+). The catalysed reaction is dodecan-1-ol + reduced [NADPH--hemoprotein reductase] + O2 = 1,3-dodecanediol + oxidized [NADPH--hemoprotein reductase] + H2O + H(+). Functionally, self-sufficient cytochrome P450 monooxygenase that catalyzes the regioselective in-chain hydroxylation of alkanes, fatty alcohols, and fatty acids. Preferentially hydroxylates 1-dodecanol at C3 and C4 (positions omega-8 and omega-9). It is very likely that CYP505U2 prefers dodecanol, and probably other fatty alcohols, over fatty acids as substrates. Does not show any significant activity toward tetradecanoic acid. In Exserohilum turcicum (strain 28A) (Northern leaf blight fungus), this protein is Self-sufficient cytochrome P450 monooxygenase CYP505U2.